The sequence spans 199 residues: Nucleoid occlusion factor SlmA (199 aa).

In terms of domain architecture, HTH tetR-type spans 11-71 (ERRQQVLTVL…ALIDNLEAHL (61 aa)). Residues 34–53 (TTARIAAEVGVSEAALYRYY) constitute a DNA-binding region (H-T-H motif).

Belongs to the nucleoid occlusion factor SlmA family. In terms of assembly, homodimer. Interacts with FtsZ.

It is found in the cytoplasm. It localises to the nucleoid. Its function is as follows. Required for nucleoid occlusion (NO) phenomenon, which prevents Z-ring formation and cell division over the nucleoid. Acts as a DNA-associated cell division inhibitor that binds simultaneously chromosomal DNA and FtsZ, and disrupts the assembly of FtsZ polymers. SlmA-DNA-binding sequences (SBS) are dispersed on non-Ter regions of the chromosome, preventing FtsZ polymerization at these regions. This Pasteurella multocida (strain Pm70) protein is Nucleoid occlusion factor SlmA.